The chain runs to 149 residues: Nucleoside diphosphate kinase (149 aa).

ATP is bound by residues lysine 9, phenylalanine 57, arginine 85, threonine 91, arginine 102, and asparagine 112. The active-site Pros-phosphohistidine intermediate is histidine 115.

The protein belongs to the NDK family. Homotetramer. Requires Mg(2+) as cofactor.

The protein localises to the cytoplasm. The enzyme catalyses a 2'-deoxyribonucleoside 5'-diphosphate + ATP = a 2'-deoxyribonucleoside 5'-triphosphate + ADP. The catalysed reaction is a ribonucleoside 5'-diphosphate + ATP = a ribonucleoside 5'-triphosphate + ADP. Major role in the synthesis of nucleoside triphosphates other than ATP. The ATP gamma phosphate is transferred to the NDP beta phosphate via a ping-pong mechanism, using a phosphorylated active-site intermediate. This is Nucleoside diphosphate kinase from Pelotomaculum thermopropionicum (strain DSM 13744 / JCM 10971 / SI).